Here is a 144-residue protein sequence, read N- to C-terminus: UPF0735 ACT domain-containing protein LCABL_12100 (144 aa).

Positions 68-143 constitute an ACT domain; sequence VISLMLHHDR…GVSDVHLVSV (76 aa).

Belongs to the UPF0735 family.

In Lacticaseibacillus casei (strain BL23) (Lactobacillus casei), this protein is UPF0735 ACT domain-containing protein LCABL_12100.